A 212-amino-acid chain; its full sequence is ATP-dependent dethiobiotin synthetase BioD (212 aa).

10–15 (GVGKTF) is a binding site for ATP. A Mg(2+)-binding site is contributed by threonine 14. Lysine 36 is a catalytic residue. Substrate is bound at residue serine 40. ATP is bound by residues aspartate 45, 106–109 (EGAG), and 167–168 (NC). 2 residues coordinate Mg(2+): aspartate 45 and glutamate 106.

It belongs to the dethiobiotin synthetase family. Homodimer. Mg(2+) serves as cofactor.

It localises to the cytoplasm. It carries out the reaction (7R,8S)-7,8-diammoniononanoate + CO2 + ATP = (4R,5S)-dethiobiotin + ADP + phosphate + 3 H(+). Its pathway is cofactor biosynthesis; biotin biosynthesis; biotin from 7,8-diaminononanoate: step 1/2. Functionally, catalyzes a mechanistically unusual reaction, the ATP-dependent insertion of CO2 between the N7 and N8 nitrogen atoms of 7,8-diaminopelargonic acid (DAPA, also called 7,8-diammoniononanoate) to form a ureido ring. This is ATP-dependent dethiobiotin synthetase BioD from Methanococcus aeolicus (strain ATCC BAA-1280 / DSM 17508 / OCM 812 / Nankai-3).